Consider the following 101-residue polypeptide: Small integral membrane protein 14 (101 aa).

Residues 71 to 81 (SDRRTADDAAI) are compositionally biased toward basic and acidic residues. A disordered region spans residues 71 to 101 (SDRRTADDAAIEKPTGSSDDNTPPPPPPSAM). The span at 92–101 (TPPPPPPSAM) shows a compositional bias: pro residues.

This is Small integral membrane protein 14 from Caenorhabditis elegans.